A 593-amino-acid chain; its full sequence is Mono(ADP-ribosyl)transferase SpvB (593 aa).

The interval 361–384 (PVNNMMPPPPPPPPPMMGGNSSRP) is disordered. A compositionally biased stretch (pro residues) spans 366–376 (MPPPPPPPPPM). In terms of domain architecture, TR mART core spans 375-578 (PMMGGNSSRP…LRLSDDATAD (204 aa)). Residues Arg-473, Ser-503, and Glu-540 contribute to the active site.

Belongs to the SpvB family.

The protein localises to the secreted. The catalysed reaction is L-arginyl-[protein] + NAD(+) = N(omega)-(ADP-D-ribosyl)-L-arginyl-[protein] + nicotinamide + H(+). Mono-ADP-ribosylates muscle and non-muscle actin. ADP-ribosylates Chinese hamster ovary and HeLa cell actin as well as rabbit muscle, porcine heart actin and non-muscle beta- and gamma-actin. ADP-ribosylation of actin prevents the polymerization of G actin to F actin, causing actin filament depolymerization, destruction of the cytoskeleton and cytotoxicity; this requires only the C-terminal 120 residues. Does not possess NAD(+)-glycohydrolase activity, unlike most mART enzymes. In Salmonella dublin, this protein is Mono(ADP-ribosyl)transferase SpvB (spvB).